The primary structure comprises 194 residues: Insertion element IS136 uncharacterized 21.2 kDa protein (194 aa).

A disordered region spans residues 73 to 103; sequence SCDRACAPTPGRDPPVSSLPNSRQPARQNPR. The span at 90 to 103 shows a compositional bias: polar residues; that stretch reads SLPNSRQPARQNPR.

This is Insertion element IS136 uncharacterized 21.2 kDa protein from Agrobacterium tumefaciens (strain T37).